Consider the following 171-residue polypeptide: Probable chorismate pyruvate-lyase (171 aa).

M36, R78, L116, and E157 together coordinate substrate.

Belongs to the UbiC family.

It is found in the cytoplasm. The catalysed reaction is chorismate = 4-hydroxybenzoate + pyruvate. It participates in cofactor biosynthesis; ubiquinone biosynthesis. In terms of biological role, removes the pyruvyl group from chorismate, with concomitant aromatization of the ring, to provide 4-hydroxybenzoate (4HB) for the ubiquinone pathway. This Bartonella henselae (strain ATCC 49882 / DSM 28221 / CCUG 30454 / Houston 1) (Rochalimaea henselae) protein is Probable chorismate pyruvate-lyase.